A 146-amino-acid chain; its full sequence is Protein PBDC1 homolog (146 aa).

It belongs to the PBDC1 family.

It is found in the cytoplasm. In Saccharomyces cerevisiae (strain ATCC 204508 / S288c) (Baker's yeast), this protein is Protein PBDC1 homolog.